The primary structure comprises 385 residues: Hsp70/Hsp90 co-chaperone CNS1 (385 aa).

The disordered stretch occupies residues Met-1 to Ser-37. 3 TPR repeats span residues Ala-83–Asp-116, Glu-121–Asn-154, and Val-155–Asn-189.

Belongs to the TTC4 family. In terms of assembly, monomer. Component of Hsp70 and Hsp90 chaperone complexes. Interacts (via TPR repeats) with HSC82 and HSP82 (via C-terminal MEEVD pentapeptide). Interacts with CPR7, SSA1 and SPI1.

It localises to the cytoplasm. Functionally, co-chaperone that binds to the molecular chaperones Hsp90 (HSC82 and HSP82) and Hsp70 (SSA1). Stimulates SSA1 ATPase activity, but not Hsp90 ATPase activity. Involved in only a subset of Hsp90 functions. This is Hsp70/Hsp90 co-chaperone CNS1 (CNS1) from Saccharomyces cerevisiae (strain ATCC 204508 / S288c) (Baker's yeast).